We begin with the raw amino-acid sequence, 861 residues long: DNA mismatch repair protein MutS (861 aa).

An ATP-binding site is contributed by 614 to 621; it reads GPNMGGKS.

It belongs to the DNA mismatch repair MutS family.

This protein is involved in the repair of mismatches in DNA. It is possible that it carries out the mismatch recognition step. This protein has a weak ATPase activity. The chain is DNA mismatch repair protein MutS from Mannheimia succiniciproducens (strain KCTC 0769BP / MBEL55E).